A 203-amino-acid chain; its full sequence is Urease accessory protein UreG (203 aa).

Residue 13–20 (GPVGSGKT) coordinates GTP.

It belongs to the SIMIBI class G3E GTPase family. UreG subfamily. Homodimer. UreD, UreF and UreG form a complex that acts as a GTP-hydrolysis-dependent molecular chaperone, activating the urease apoprotein by helping to assemble the nickel containing metallocenter of UreC. The UreE protein probably delivers the nickel.

The protein resides in the cytoplasm. Functionally, facilitates the functional incorporation of the urease nickel metallocenter. This process requires GTP hydrolysis, probably effectuated by UreG. This Methylobacillus flagellatus (strain ATCC 51484 / DSM 6875 / VKM B-1610 / KT) protein is Urease accessory protein UreG.